A 481-amino-acid chain; its full sequence is MHTCAPPHHFSSLKFPELHGSSKLNNLQVLRSFGLSKRSFKVFAVAASSSSSMSEASNYIPAAPIFLPEGPWQQIPGGVTAAKGFKAAGIYGGLRAKGEKPDLALVTCDVDATAAGAFTTNMVAAAPVLYCKNALDISKTARAVLINAGQANAATGDAGYQDVLESVGALAMLLKLKPEEVLIESTGIIGQRIKKGALLNSLPKLVNSLSPSIEGAGSAAVAITTTDLVSKSVAIESQVGGTNIKVGGMAKGSGMIHPNMATMLGVITTDALVNSDVWRKMVQISVNRSFNQITVDGDTSTNDTVIALASGLSGSISISNINCHEAMQLQACLDAVMQGLAKSIAWDGEGATCLIEVTVTGAESEAKAAKIARAVASSSLVKAAVYGRDPNWGRIAAAAGYAGIPFHQNNLRIMLGDILLMDNGQPLSFDRSAASNYLRKAGEIHGTVGIYISVGDGPGSGQAWGCDLSYDYVKINAEYTT.

Threonine 225, lysine 251, threonine 262, glutamate 349, asparagine 476, and threonine 481 together coordinate substrate. The active-site Nucleophile is threonine 262.

Belongs to the ArgJ family. Heterodimer of an alpha and a beta chain.

The protein resides in the plastid. It is found in the chloroplast. It catalyses the reaction N(2)-acetyl-L-ornithine + L-glutamate = N-acetyl-L-glutamate + L-ornithine. The catalysed reaction is L-glutamate + acetyl-CoA = N-acetyl-L-glutamate + CoA + H(+). The protein operates within amino-acid biosynthesis; L-arginine biosynthesis; L-ornithine and N-acetyl-L-glutamate from L-glutamate and N(2)-acetyl-L-ornithine (cyclic): step 1/1. It participates in amino-acid biosynthesis; L-arginine biosynthesis; N(2)-acetyl-L-ornithine from L-glutamate: step 1/4. Catalyzes two activities which are involved in the cyclic version of arginine biosynthesis: the synthesis of acetylglutamate from glutamate and acetyl-CoA, and of ornithine by transacetylation between acetylornithine and glutamate. The protein is Arginine biosynthesis bifunctional protein ArgJ, chloroplastic of Populus trichocarpa (Western balsam poplar).